Here is a 144-residue protein sequence, read N- to C-terminus: Transcription antitermination protein NusB (144 aa).

It belongs to the NusB family.

Functionally, involved in transcription antitermination. Required for transcription of ribosomal RNA (rRNA) genes. Binds specifically to the boxA antiterminator sequence of the ribosomal RNA (rrn) operons. This chain is Transcription antitermination protein NusB, found in Histophilus somni (strain 129Pt) (Haemophilus somnus).